We begin with the raw amino-acid sequence, 674 residues long: tRNA 5-methylaminomethyl-2-thiouridine biosynthesis bifunctional protein MnmC (674 aa).

The tRNA (mnm(5)s(2)U34)-methyltransferase stretch occupies residues Met-1–Ala-248. The interval Ile-276–Arg-674 is FAD-dependent cmnm(5)s(2)U34 oxidoreductase.

It in the N-terminal section; belongs to the methyltransferase superfamily. tRNA (mnm(5)s(2)U34)-methyltransferase family. This sequence in the C-terminal section; belongs to the DAO family. FAD serves as cofactor.

It is found in the cytoplasm. It carries out the reaction 5-aminomethyl-2-thiouridine(34) in tRNA + S-adenosyl-L-methionine = 5-methylaminomethyl-2-thiouridine(34) in tRNA + S-adenosyl-L-homocysteine + H(+). Catalyzes the last two steps in the biosynthesis of 5-methylaminomethyl-2-thiouridine (mnm(5)s(2)U) at the wobble position (U34) in tRNA. Catalyzes the FAD-dependent demodification of cmnm(5)s(2)U34 to nm(5)s(2)U34, followed by the transfer of a methyl group from S-adenosyl-L-methionine to nm(5)s(2)U34, to form mnm(5)s(2)U34. In Hydrogenovibrio crunogenus (strain DSM 25203 / XCL-2) (Thiomicrospira crunogena), this protein is tRNA 5-methylaminomethyl-2-thiouridine biosynthesis bifunctional protein MnmC.